The chain runs to 940 residues: Phosphoenolpyruvate carboxylase (940 aa).

Residues His-138 and Lys-603 contribute to the active site.

Belongs to the PEPCase type 1 family. It depends on Mg(2+) as a cofactor.

The enzyme catalyses oxaloacetate + phosphate = phosphoenolpyruvate + hydrogencarbonate. In terms of biological role, forms oxaloacetate, a four-carbon dicarboxylic acid source for the tricarboxylic acid cycle. The sequence is that of Phosphoenolpyruvate carboxylase from Streptococcus thermophilus (strain ATCC BAA-250 / LMG 18311).